Reading from the N-terminus, the 61-residue chain is Small ribosomal subunit protein uS14 (61 aa).

Zn(2+) is bound by residues Cys24, Cys27, Cys40, and Cys43.

The protein belongs to the universal ribosomal protein uS14 family. Zinc-binding uS14 subfamily. As to quaternary structure, part of the 30S ribosomal subunit. Contacts proteins S3 and S10. Zn(2+) is required as a cofactor.

Functionally, binds 16S rRNA, required for the assembly of 30S particles and may also be responsible for determining the conformation of the 16S rRNA at the A site. The protein is Small ribosomal subunit protein uS14 of Staphylococcus aureus (strain USA300 / TCH1516).